The chain runs to 294 residues: Phosphonoacetaldehyde hydrolase (294 aa).

The active-site Nucleophile is the aspartate 19. Residues aspartate 19 and alanine 21 each coordinate Mg(2+). Lysine 60 functions as the Schiff-base intermediate with substrate in the catalytic mechanism. Aspartate 193 is a Mg(2+) binding site.

This sequence belongs to the HAD-like hydrolase superfamily. PhnX family. As to quaternary structure, homodimer. Mg(2+) is required as a cofactor.

It catalyses the reaction phosphonoacetaldehyde + H2O = acetaldehyde + phosphate + H(+). In terms of biological role, involved in phosphonate degradation. The sequence is that of Phosphonoacetaldehyde hydrolase from Hahella chejuensis (strain KCTC 2396).